A 410-amino-acid chain; its full sequence is 3-phosphoshikimate 1-carboxyvinyltransferase (410 aa).

3-phosphoshikimate contacts are provided by K27, S28, and R32. K27 serves as a coordination point for phosphoenolpyruvate. Residues G91 and R119 each contribute to the phosphoenolpyruvate site. 3-phosphoshikimate is bound by residues S161, S162, Q163, D297, Q319, and K323. Q163 is a binding site for phosphoenolpyruvate. Residue D297 is the Proton acceptor of the active site. Residues R327, R368, and K394 each contribute to the phosphoenolpyruvate site.

It belongs to the EPSP synthase family. Monomer.

It localises to the cytoplasm. It catalyses the reaction 3-phosphoshikimate + phosphoenolpyruvate = 5-O-(1-carboxyvinyl)-3-phosphoshikimate + phosphate. It participates in metabolic intermediate biosynthesis; chorismate biosynthesis. Its function is as follows. Catalyzes the transfer of the enolpyruvyl moiety of phosphoenolpyruvate (PEP) to the 5-hydroxyl of shikimate-3-phosphate (S3P) to produce enolpyruvyl shikimate-3-phosphate and inorganic phosphate. In Pyrococcus abyssi (strain GE5 / Orsay), this protein is 3-phosphoshikimate 1-carboxyvinyltransferase.